The chain runs to 550 residues: Hydroxylamine reductase (550 aa).

The [2Fe-2S] cluster site is built by C3, C6, C18, and C25. The hybrid [4Fe-2O-2S] cluster site is built by H249, E273, C317, C405, C433, C458, E492, and K494. Residue C405 is modified to Cysteine persulfide.

This sequence belongs to the HCP family. Requires [2Fe-2S] cluster as cofactor. Hybrid [4Fe-2O-2S] cluster serves as cofactor.

It is found in the cytoplasm. The catalysed reaction is A + NH4(+) + H2O = hydroxylamine + AH2 + H(+). Its function is as follows. Catalyzes the reduction of hydroxylamine to form NH(3) and H(2)O. The sequence is that of Hydroxylamine reductase from Enterobacter sp. (strain 638).